The following is a 62-amino-acid chain: Large ribosomal subunit protein bL32 (62 aa).

The segment covering 1–18 (MGVPKKRTSKMRRDRRRA) has biased composition (basic residues). Residues 1–22 (MGVPKKRTSKMRRDRRRAANNN) form a disordered region.

The protein belongs to the bacterial ribosomal protein bL32 family.

The sequence is that of Large ribosomal subunit protein bL32 from Myxococcus xanthus (strain DK1622).